The primary structure comprises 641 residues: Methionine--tRNA ligase (641 aa).

The short motif at 13–23 is the 'HIGH' region element; sequence YYPSAKLHIGN. Zn(2+) contacts are provided by C128, C131, C145, and C148. The short motif at 298–302 is the 'KMSKS' region element; that stretch reads KMSKS. An ATP-binding site is contributed by K301. The tRNA-binding domain maps to 539–641; sequence DFDKIDLRVV…GELPTGSQVR (103 aa).

Belongs to the class-I aminoacyl-tRNA synthetase family. MetG type 2A subfamily. As to quaternary structure, homodimer. The cofactor is Zn(2+).

The protein resides in the cytoplasm. The catalysed reaction is tRNA(Met) + L-methionine + ATP = L-methionyl-tRNA(Met) + AMP + diphosphate. Its function is as follows. Is required not only for elongation of protein synthesis but also for the initiation of all mRNA translation through initiator tRNA(fMet) aminoacylation. In Clostridium tetani (strain Massachusetts / E88), this protein is Methionine--tRNA ligase.